We begin with the raw amino-acid sequence, 94 residues long: Pyrimidine/purine nucleoside phosphorylase (94 aa).

Belongs to the nucleoside phosphorylase PpnP family.

The enzyme catalyses a purine D-ribonucleoside + phosphate = a purine nucleobase + alpha-D-ribose 1-phosphate. It catalyses the reaction adenosine + phosphate = alpha-D-ribose 1-phosphate + adenine. The catalysed reaction is cytidine + phosphate = cytosine + alpha-D-ribose 1-phosphate. It carries out the reaction guanosine + phosphate = alpha-D-ribose 1-phosphate + guanine. The enzyme catalyses inosine + phosphate = alpha-D-ribose 1-phosphate + hypoxanthine. It catalyses the reaction thymidine + phosphate = 2-deoxy-alpha-D-ribose 1-phosphate + thymine. The catalysed reaction is uridine + phosphate = alpha-D-ribose 1-phosphate + uracil. It carries out the reaction xanthosine + phosphate = alpha-D-ribose 1-phosphate + xanthine. Its function is as follows. Catalyzes the phosphorolysis of diverse nucleosides, yielding D-ribose 1-phosphate and the respective free bases. Can use uridine, adenosine, guanosine, cytidine, thymidine, inosine and xanthosine as substrates. Also catalyzes the reverse reactions. This is Pyrimidine/purine nucleoside phosphorylase from Escherichia fergusonii (strain ATCC 35469 / DSM 13698 / CCUG 18766 / IAM 14443 / JCM 21226 / LMG 7866 / NBRC 102419 / NCTC 12128 / CDC 0568-73).